A 400-amino-acid polypeptide reads, in one-letter code: Probable vacuolar protease A (400 aa).

An N-terminal signal peptide occupies residues 1–18; the sequence is MKGSLLLAGATLLGCTSA. The propeptide at 19–72 is activation peptide; sequence KLHSLKLKKVSLKEQLEHADIDVQIKSLGQKYMGIRPEQHEQQMFKEQTPIEAE. Positions 87–397 constitute a Peptidase A1 domain; the sequence is YFSEISIGTP…DLGKGTVGLA (311 aa). The active site involves D105. Residues C118 and C123 are joined by a disulfide bond. The N-linked (GlcNAc...) asparagine glycan is linked to N140. Residue D289 is part of the active site. The cysteines at positions 323 and 356 are disulfide-linked. N-linked (GlcNAc...) asparagine glycosylation is present at N340.

This sequence belongs to the peptidase A1 family.

The protein resides in the vacuole lumen. It is found in the secreted. It carries out the reaction Hydrolysis of proteins with broad specificity for peptide bonds. Cleaves -Leu-Leu-|-Val-Tyr- bond in a synthetic substrate. Does not act on esters of Tyr or Arg.. In terms of biological role, vacuolar aspartic endopeptidase which is probably also secreted and contributes to virulence. The protein is Probable vacuolar protease A (PEP2) of Trichophyton verrucosum (strain HKI 0517).